We begin with the raw amino-acid sequence, 546 residues long: Germacrene-D synthase (546 aa).

Mg(2+)-binding residues include Asp303, Asp307, Asp448, and Glu456. A DDXXD motif motif is present at residues 303-307 (DDIYD).

Belongs to the terpene synthase family. Requires Mg(2+) as cofactor. Mn(2+) is required as a cofactor.

It carries out the reaction (2E,6E)-farnesyl diphosphate = (-)-germacrene D + diphosphate. The protein operates within secondary metabolite biosynthesis; terpenoid biosynthesis. Sesquiterpene synthase that catalyzes the formation of germacrene D from trans,trans-farnesyl diphosphate (FPP). The protein is Germacrene-D synthase (GDS) of Ocimum basilicum (Sweet basil).